Reading from the N-terminus, the 789-residue chain is Transducer protein Htr6 (789 aa).

Helical transmembrane passes span Phe29–Gln49 and Thr294–Gly314. 2 HAMP domains span residues Arg315–Gln367 and Glu409–Ala462. In terms of domain architecture, Methyl-accepting transducer spans Gly481–Ala717. The interval Asn763–Asp789 is disordered. Positions Asp772–Asp789 are enriched in acidic residues.

It belongs to the methyl-accepting chemotaxis (MCP) protein family. Methylated by CheR.

The protein localises to the cell membrane. Its function is as follows. Potentially involved in chemo- or phototactic signal transduction. This Halobacterium salinarum (strain ATCC 29341 / DSM 671 / R1) protein is Transducer protein Htr6 (htr6).